A 211-amino-acid polypeptide reads, in one-letter code: Lipoprotein signal peptidase (211 aa).

3 helical membrane passes run 12-32 (LLAL…YLAV), 96-116 (AFRN…ILHY), and 127-147 (LQVA…DRLA). Residues Asp153 and Asp174 contribute to the active site. A helical transmembrane segment spans residues 167 to 187 (WPTFNIADSLIVVGVALLVLH).

This sequence belongs to the peptidase A8 family.

It is found in the cell inner membrane. It carries out the reaction Release of signal peptides from bacterial membrane prolipoproteins. Hydrolyzes -Xaa-Yaa-Zaa-|-(S,diacylglyceryl)Cys-, in which Xaa is hydrophobic (preferably Leu), and Yaa (Ala or Ser) and Zaa (Gly or Ala) have small, neutral side chains.. It participates in protein modification; lipoprotein biosynthesis (signal peptide cleavage). This protein specifically catalyzes the removal of signal peptides from prolipoproteins. The chain is Lipoprotein signal peptidase from Anaeromyxobacter sp. (strain Fw109-5).